The sequence spans 57 residues: UPF0434 protein swp_2279 (57 aa).

Belongs to the UPF0434 family.

This Shewanella piezotolerans (strain WP3 / JCM 13877) protein is UPF0434 protein swp_2279.